A 77-amino-acid chain; its full sequence is MAVEIIVDREKCIGCGRCYDVCPKGPLIWTKDENGKYYAYDVEYCHNCKFCAGRCPTNAILIKVVKPKKKDENKNKK.

2 4Fe-4S ferredoxin-type domains span residues 3 to 32 (VEIIVDREKCIGCGRCYDVCPKGPLIWTKD) and 36 to 65 (KYYAYDVEYCHNCKFCAGRCPTNAILIKVV). Cysteine 12, cysteine 15, cysteine 18, cysteine 22, cysteine 45, cysteine 48, cysteine 51, and cysteine 55 together coordinate [4Fe-4S] cluster.

It depends on [4Fe-4S] cluster as a cofactor.

In terms of biological role, ferredoxins are iron-sulfur proteins that transfer electrons probably in the CO-dehydrogenase complex. This is an uncharacterized protein from Methanocaldococcus jannaschii (strain ATCC 43067 / DSM 2661 / JAL-1 / JCM 10045 / NBRC 100440) (Methanococcus jannaschii).